Consider the following 1087-residue polypeptide: Apoptosis-stimulating of p53 protein 1 (1087 aa).

The tract at residues 82–122 (HEDSPTESSEQGARQTQEQRTQRSVVNVPGEKRTENGVGNP) is disordered. Residues 87–106 (TESSEQGARQTQEQRTQRSV) show a composition bias toward polar residues. Phosphoserine occurs at positions 332 and 335. Disordered stretches follow at residues 374–415 (SSAA…GMEG), 442–721 (IGKG…PNIQ), and 734–878 (GMEG…TGHG). Residues 393-405 (KQNSASVKSTQMT) show a composition bias toward polar residues. Pro residues predominate over residues 445 to 458 (GPPPIPGVGKPLPP). Residues 459–476 (SYGTYPSSGPLGPGSTSS) are compositionally biased toward low complexity. Residues 506–520 (NAPQPGSSQQIQQRI) are compositionally biased toward polar residues. Positions 523-536 (PPSPTYPPAGPPAF) are enriched in pro residues. Arg552 bears the Asymmetric dimethylarginine mark. Over residues 570–589 (QTVNSSSIYSMYLQQATPPK) the composition is skewed to polar residues. Over residues 610–625 (PVLPSGSASPSPLPFL) the composition is skewed to low complexity. Phosphoserine occurs at positions 679 and 708. The segment covering 805–831 (PQTTHQTAEPTEDNNNNVAPVPSTEQI) has biased composition (polar residues). ANK repeat units lie at residues 917 to 949 (EGITPLHNAVCAGHHHIVKFLLDFGVNVNAADS) and 950 to 982 (DGWTPLHCAASCNSVHLCKQLVESGAAIFASTI). Positions 1016 to 1078 (MNKGTVYALW…PKNLLGLYPR (63 aa)) constitute an SH3 domain.

It belongs to the ASPP family. In terms of assembly, interacts with P53/TP53; the interaction promotes pro-apoptotic activity.

Its subcellular location is the cytoplasm. The protein localises to the nucleus. Functionally, regulator that plays a central role in regulation of apoptosis via its interaction with p53/TP53. Regulates TP53 by enhancing the DNA binding and transactivation function of TP53 on the promoters of proapoptotic genes in vivo. In Mus musculus (Mouse), this protein is Apoptosis-stimulating of p53 protein 1 (Ppp1r13b).